The following is a 918-amino-acid chain: Importin subunit beta-2 (918 aa).

18 HEAT repeats span residues 11–38 (YVLQLATLLQNCMSPNPEIRNNAMEAME), 43–92 (QPEF…GGNN), 103–137 (YVKSNIIHGLYNSNNNLVSNVTGIVITTLFSTYYR), 145–181 (GLQMLYQLLELTSNGNEPSIKALSKIMEDSAQFFQLE), 190–222 (EALLDSFFRFISNPNFSPVIRSESVKCINTVIP), 235–263 (FLEIIFQLAQNDENDLVRAQICISFSFLL), 275–303 (DGIVQFMLHLITTVNEEKVAIEACEFLHA), 320–413 (KDIV…MTNI), 421–449 (IAFPFLREHLGSDRWFIREATILALGAMA), 461–488 (PALIPFLVEQLNDKWAPVRKMTCWTLSR), 501–534 (LIPVLEPIINTLMDKKKDVQEAAISSVAVFIENA), 542–577 (LFYSQLLTSFDKCLKYYKKKNLIILYDAIGRFAEKC), 583–620 (AMQIILPPLIEKWALLSDSDKELWPLLECLSCVASSLG), 628–678 (PEVY…GLGA), 694–725 (ILKIMLECLQDPVHEVRQSCFALLGDIVYFFN), 777–814 (IDMSRIILDLFTTNTQIVDSSVMENLSVTIGKMGLTHP), 825–858 (DSNWNKWCLSVNALDDVEEKSSAYMGFLKIINLT), and 867–900 (DTIHKIVTGLSSNVEANVFAQEIYTFLMNHSAQI). The tract at residues 361–395 (APRIVKKKEAGNGEDADDNEDDDDDDDDEDGDVDT) is disordered. Positions 372-393 (NGEDADDNEDDDDDDDDEDGDV) are enriched in acidic residues.

This sequence belongs to the importin beta family. Importin beta-2 subfamily. As to quaternary structure, interacts with Ran (GSP1); interacts specifically with the GTP-bound form of Ran (GTP-Ran), protecting it from GTP hydrolysis and nucleotide exchange. Interacts with nucleoporins NUP1, NUP100 and NUP116. Interacts with NAB2 and HRP1/NAB4; via their rg-NLS. Interacts with TFG2; via its PY-NLS.

Its subcellular location is the cytoplasm. It is found in the nucleus. The protein resides in the nuclear pore complex. Functions in nuclear protein import as nuclear transport receptor. Serves as receptor for arginine/glycine-rich nuclear localization signals (rg-NLS) and PY-NLS in cargo substrates. Its predominant cargo substrate seems to be mRNA-binding proteins. Required for nuclear transport of NAB2, HRP1/NAB4 and TFG2. Mediates docking of the importin/substrate complex to the nuclear pore complex (NPC) through binding to repeat-containing nucleoporins. The complex is subsequently translocated through the pore by an energy requiring, Ran-dependent mechanism. At the nucleoplasmic side of the NPC, GTP-Ran binding leads to release of the cargo. Efficient GTP-Ran-mediated substrate release requires RNA. The importin is re-exported from the nucleus to the cytoplasm where GTP hydrolysis releases Ran from importin. The directionality of nuclear import is thought to be conferred by an asymmetric distribution of the GTP- and GDP-bound forms of Ran between the cytoplasm and nucleus. This is Importin subunit beta-2 from Saccharomyces cerevisiae (strain ATCC 204508 / S288c) (Baker's yeast).